Reading from the N-terminus, the 1360-residue chain is S-layer protein A (1360 aa).

The first 24 residues, 1-24 (MNKSAIRYLSLLLVFLMGGSFLAG), serve as a signal peptide directing secretion.

This sequence belongs to the Sulfolobales SlaA family. The mushroom-shaped unit cells of the Sulfolobales' S-layers may consist of three SlaB subunits and six SlaA subunits.

The protein localises to the secreted. It localises to the cell wall. The protein resides in the S-layer. Its function is as follows. S-layer large protein. May form the highly ordered outer sheath. This is S-layer protein A from Metallosphaera sedula (strain ATCC 51363 / DSM 5348 / JCM 9185 / NBRC 15509 / TH2).